Here is a 154-residue protein sequence, read N- to C-terminus: Transcription antitermination protein NusB (154 aa).

The protein belongs to the NusB family.

Functionally, involved in transcription antitermination. Required for transcription of ribosomal RNA (rRNA) genes. Binds specifically to the boxA antiterminator sequence of the ribosomal RNA (rrn) operons. This chain is Transcription antitermination protein NusB, found in Oleidesulfovibrio alaskensis (strain ATCC BAA-1058 / DSM 17464 / G20) (Desulfovibrio alaskensis).